The sequence spans 621 residues: Altered inheritance of mitochondria protein 9, mitochondrial (621 aa).

Residues methionine 1 to valine 40 constitute a mitochondrion transit peptide.

Belongs to the AIM9 family.

It is found in the mitochondrion. This chain is Altered inheritance of mitochondria protein 9, mitochondrial (AIM9), found in Zygosaccharomyces rouxii (strain ATCC 2623 / CBS 732 / NBRC 1130 / NCYC 568 / NRRL Y-229).